We begin with the raw amino-acid sequence, 460 residues long: MRPTRWRRSTHVAVGVAVLALVVAVVAAAALFTGKHSDAAEAVPPAPPPATADPGVVPVDLSAPTPTRRGLATALAAALANPDLGLITGRITDADTGAELWEQGARVPMQPASVNKVLTTAAALLTLDRDARLTTTVVAADDQPGLVVLRGGGDTTLSAAPKGTDTWYKGAARISDLADQVRARGIRVTRVRVDTSAYSGPTMAPGWDPADIDGGDIAPMESVMLDGGRTQPTTVESRRSKSPALDAGKALAAALGVEPESVTLMPSGMRGGTTIAEVQSAPLIERLRQMMNESDNVMAESIAREVAEALGRPQSFEGAVGAVLTQLRSVGIDTSGAKLVDSSGLSVDNRLTALTLDEVVNAAAGHTQPALRPLVDLLPIAGGSGTLSNRYLDTDAGRAAAGWLRAKTGSLTGTNALAGIVTDRSGRVLTFALISNNAGPTGRTAIDALAAVLRSCGCGA.

Positions 1–28 (MRPTRWRRSTHVAVGVAVLALVVAVVAA) are cleaved as a signal peptide. The tract at residues 39-64 (AAEAVPPAPPPATADPGVVPVDLSAP) is disordered. The active-site Acyl-ester intermediate is the serine 113. Lysine 116 (proton acceptor) is an active-site residue. Serine 294 is a catalytic residue.

The protein belongs to the peptidase S13 family.

In terms of biological role, carboxypeptidase that cleaves terminal D-alanine from peptidoglycan in the mycobacterial cell wall. May cleave L-Lys-D-Ala and/or D-Ala-D-Ala peptide bonds. Exerts important effects on mycobacterial cell morphology and cell division. This chain is Carboxypeptidase DacB, found in Mycolicibacterium smegmatis (strain ATCC 700084 / mc(2)155) (Mycobacterium smegmatis).